Consider the following 396-residue polypeptide: Probable protein phosphatase 2C 25 (396 aa).

A disordered region spans residues 32–98 (ESLSLTLSHR…SPPGGVLKRK (67 aa)). The segment covering 44 to 61 (QTSSPSSPSTTVSSPKSP) has biased composition (low complexity). A PPM-type phosphatase domain is found at 139–392 (GYSVYCKRGR…DDISVMLIPL (254 aa)). D175, G176, D338, and D383 together coordinate Mn(2+).

This sequence belongs to the PP2C family. In terms of assembly, interacts with MPK4 and MPK6. It depends on Mg(2+) as a cofactor. Mn(2+) serves as cofactor.

Its subcellular location is the cytoplasm. The protein localises to the nucleus. The catalysed reaction is O-phospho-L-seryl-[protein] + H2O = L-seryl-[protein] + phosphate. The enzyme catalyses O-phospho-L-threonyl-[protein] + H2O = L-threonyl-[protein] + phosphate. Functionally, protein phosphatase that negatively regulates defense respones. Inactivates MPK4 and MPK6 MAP kinases involved in stress and defense signaling. In Arabidopsis thaliana (Mouse-ear cress), this protein is Probable protein phosphatase 2C 25.